A 208-amino-acid polypeptide reads, in one-letter code: Small ribosomal subunit protein uS4 (208 aa).

The region spanning 98-160 (QRLDNVVYRM…SKNNSQIVRA (63 aa)) is the S4 RNA-binding domain.

It belongs to the universal ribosomal protein uS4 family. In terms of assembly, part of the 30S ribosomal subunit. Contacts protein S5. The interaction surface between S4 and S5 is involved in control of translational fidelity.

One of the primary rRNA binding proteins, it binds directly to 16S rRNA where it nucleates assembly of the body of the 30S subunit. In terms of biological role, with S5 and S12 plays an important role in translational accuracy. This is Small ribosomal subunit protein uS4 from Sulfurimonas denitrificans (strain ATCC 33889 / DSM 1251) (Thiomicrospira denitrificans (strain ATCC 33889 / DSM 1251)).